Reading from the N-terminus, the 458-residue chain is Argininosuccinate lyase (458 aa).

This sequence belongs to the lyase 1 family. Argininosuccinate lyase subfamily.

The protein resides in the cytoplasm. The enzyme catalyses 2-(N(omega)-L-arginino)succinate = fumarate + L-arginine. Its pathway is amino-acid biosynthesis; L-arginine biosynthesis; L-arginine from L-ornithine and carbamoyl phosphate: step 3/3. In Pelobacter propionicus (strain DSM 2379 / NBRC 103807 / OttBd1), this protein is Argininosuccinate lyase.